The sequence spans 302 residues: MTTPQFGSQRSDDDNWDIVSSVGYTALLVAGWRALHAVSPRPLVRDDYAKTFIAASGDPYLTGVLANPGTSEDELAFPRLYGVQTRFFDDFFDAAGAAGIRQAVIIAAGLDSRAYRLEWPPATTVFEVDLAKVLEFKARVLGEQGAVPKARRVEVAADLRADWSRPLEAAGFDVESPSAWSVEGLLPYLTDEAQHALFTRISGLSAPGSRIAIGALGSRLDHDQLHALEESHPGVDVSGNVDFSALTYEPQSDPAEWLAAHGWVVDPVRNTLDLQAGYGMTPPEVDVKIDGFMRSQYITAAR.

Residues Asp-129 and 158–159 each bind S-adenosyl-L-methionine; that span reads DL.

This sequence belongs to the UPF0677 family.

Functionally, exhibits S-adenosyl-L-methionine-dependent methyltransferase activity. The chain is Putative S-adenosyl-L-methionine-dependent methyltransferase MAV_2803 from Mycobacterium avium (strain 104).